The following is a 490-amino-acid chain: Metal cation symporter ZIP14 (490 aa).

A signal peptide spans 1–28 (MKLLHPAFQSCLLLTLLGLWRTTPEAHA). At 29-155 (SSPGAPAISA…PSAVEVWGYG (127 aa)) the chain is on the extracellular side. N-linked (GlcNAc...) asparagine glycosylation is found at Asn-75, Asn-85, and Asn-100. Residues 156-176 (LLCVTVISLCSLLGASVVPFM) form a helical membrane-spanning segment. At 177–184 (KKTFYKRL) the chain is on the cytoplasmic side. The chain crosses the membrane as a helical span at residues 185 to 205 (LLYFIALAIGTLYSNALFQLI). Over 206–222 (PEAFGFNPLEDYYVSKS) the chain is Extracellular. The helical transmembrane segment at 223 to 243 (AVVFGGFYLFFFTEKILKILL) threads the bilayer. The Cytoplasmic portion of the chain corresponds to 244-395 (KQKNEHHHGH…LLNAGMSIQQ (152 aa)). The HHHGHXHX-motif motif lies at 249-256 (HHHGHSHY). Positions 374–379 (EEFPHE) match the XEXPHE-motif motif. The helical transmembrane segment at 396–416 (ALFFNFLSACCCYLGLAFGIL) threads the bilayer. The Extracellular segment spans residues 417–422 (AGSHFS). A helical transmembrane segment spans residues 423–443 (ANWIFALAGGMFLYISLADMF). The Cytoplasmic portion of the chain corresponds to 444–458 (PEMNEVCQEDERKGS). A helical membrane pass occupies residues 459–479 (ILIPFVIQNLGLLTGFTIMVV). The Extracellular segment spans residues 480 to 490 (LTMYSGQIQIG).

The protein belongs to the ZIP transporter (TC 2.A.5) family. In terms of assembly, homotrimer. Post-translationally, ubiquitinated. Ubiquitination occurs upon iron depletion. The ubiquitinated form undergoes proteasomal degradation. In terms of processing, N-glycosylated. N-glycosylation at Asn-100 is required for iron-regulated extraction of the transporter from membranes and subsequent proteasomal degradation.

It localises to the cell membrane. Its subcellular location is the apical cell membrane. The protein localises to the basolateral cell membrane. It is found in the early endosome membrane. The protein resides in the late endosome membrane. It localises to the lysosome membrane. The enzyme catalyses Zn(2+)(out) + 2 hydrogencarbonate(out) = Zn(2+)(in) + 2 hydrogencarbonate(in). It carries out the reaction Mn(2+)(out) + 2 hydrogencarbonate(out) = Mn(2+)(in) + 2 hydrogencarbonate(in). It catalyses the reaction Fe(2+)(out) + 2 hydrogencarbonate(out) = Fe(2+)(in) + 2 hydrogencarbonate(in). The catalysed reaction is Cd(2+)(out) + 2 hydrogencarbonate(out) = Cd(2+)(in) + 2 hydrogencarbonate(in). Its function is as follows. Electroneutral transporter of the plasma membrane mediating the cellular uptake of the divalent metal cations zinc, manganese and iron that are important for tissue homeostasis, metabolism, development and immunity. Functions as an energy-dependent symporter, transporting through the membranes an electroneutral complex composed of a divalent metal cation and two bicarbonate anions. Beside these endogenous cellular substrates, can also import cadmium a non-essential metal which is cytotoxic and carcinogenic. Controls the cellular uptake by the intestinal epithelium of systemic zinc, which is in turn required to maintain tight junctions and the intestinal permeability. Modifies the activity of zinc-dependent phosphodiesterases, thereby indirectly regulating G protein-coupled receptor signaling pathways important for gluconeogenesis and chondrocyte differentiation. Regulates insulin receptor signaling, glucose uptake, glycogen synthesis and gluconeogenesis in hepatocytes through the zinc-dependent intracellular catabolism of insulin. Through zinc cellular uptake also plays a role in the adaptation of cells to endoplasmic reticulum stress. Major manganese transporter of the basolateral membrane of intestinal epithelial cells, it plays a central role in manganese systemic homeostasis through intestinal manganese uptake. Also involved in manganese extracellular uptake by cells of the blood-brain barrier. May also play a role in manganese and zinc homeostasis participating in their elimination from the blood through the hepatobiliary excretion. Also functions in the extracellular uptake of free iron. May also function intracellularly and mediate the transport from endosomes to cytosol of iron endocytosed by transferrin. Plays a role in innate immunity by regulating the expression of cytokines by activated macrophages. This is Metal cation symporter ZIP14 from Pongo abelii (Sumatran orangutan).